A 126-amino-acid chain; its full sequence is Fluoride-specific ion channel FluC (126 aa).

2 consecutive transmembrane segments (helical) span residues 2–22 (IKSLFAVIIGGSVGCTLRWLL) and 36–56 (GTLVVNLLAGLIIGTALAYFL). Positions 75 and 78 each coordinate Na(+). 2 consecutive transmembrane segments (helical) span residues 80–100 (FSTFSVEVFALLQAGNYIWAL) and 105–125 (VHVIGSLIMTALGFFIITILF).

The protein belongs to the fluoride channel Fluc/FEX (TC 1.A.43) family. In terms of assembly, homodimer.

The protein resides in the cell inner membrane. It carries out the reaction fluoride(in) = fluoride(out). With respect to regulation, na(+) is not transported, but it plays an essential structural role and its presence is essential for fluoride channel function. Functionally, fluoride-specific ion channel. Important for reducing fluoride concentration in the cell, thus reducing its toxicity. Is highly specific for fluoride ions and cannot transport chloride ions. This chain is Fluoride-specific ion channel FluC, found in Escherichia coli O1:K1 / APEC.